A 526-amino-acid polypeptide reads, in one-letter code: Probable Xaa-Pro aminopeptidase GLRG_02280 (526 aa).

Mn(2+) contacts are provided by D285, D296, E454, and E495.

This sequence belongs to the peptidase M24B family. Requires Mn(2+) as cofactor.

It carries out the reaction Release of any N-terminal amino acid, including proline, that is linked to proline, even from a dipeptide or tripeptide.. In terms of biological role, catalyzes the removal of a penultimate prolyl residue from the N-termini of peptides. This Colletotrichum graminicola (strain M1.001 / M2 / FGSC 10212) (Maize anthracnose fungus) protein is Probable Xaa-Pro aminopeptidase GLRG_02280.